The chain runs to 261 residues: Cytochrome c oxidase subunit 3 (261 aa).

Topologically, residues 1 to 15 (MAHQAHSYHMVDPSP) are mitochondrial matrix. Residues 16-34 (WPIFGAAAALLTTSGLIMW) traverse the membrane as a helical segment. Residues 35 to 40 (FHYSST) lie on the Mitochondrial intermembrane side of the membrane. Residues 41–66 (TLLTMGLLSMLLVMLQWWRDVVREST) traverse the membrane as a helical segment. Residues 67 to 72 (FQGHHT) are Mitochondrial matrix-facing. A helical membrane pass occupies residues 73–105 (PTVQKGLRYGMILFITSEAFFFLGFFWAFFHSS). Residues 106–128 (LAPTPELGGQWPPTGVKPLNPLE) lie on the Mitochondrial intermembrane side of the membrane. A helical membrane pass occupies residues 129 to 152 (VPLLNTAILLASGVTVTWAHHSIT). Residues 153 to 155 (EGN) are Mitochondrial matrix-facing. A helical transmembrane segment spans residues 156–183 (RKQAIHALTLTILLGFYFTALQAMEYHE). Residues 184–190 (ASFSIAD) are Mitochondrial intermembrane-facing. A helical transmembrane segment spans residues 191 to 223 (SVYGSTFFVATGFHGLHVIIGSSFLTVCLLRLI). The Mitochondrial matrix portion of the chain corresponds to 224-232 (KFHFTPNHH). The chain crosses the membrane as a helical span at residues 233–256 (FGFEAAAWYWHFVDIIWLFLYMSM). Residues 257–261 (YWWGS) are Mitochondrial intermembrane-facing.

Belongs to the cytochrome c oxidase subunit 3 family. As to quaternary structure, component of the cytochrome c oxidase (complex IV, CIV), a multisubunit enzyme composed of 14 subunits. The complex is composed of a catalytic core of 3 subunits MT-CO1, MT-CO2 and MT-CO3, encoded in the mitochondrial DNA, and 11 supernumerary subunits COX4I, COX5A, COX5B, COX6A, COX6B, COX6C, COX7A, COX7B, COX7C, COX8 and NDUFA4, which are encoded in the nuclear genome. The complex exists as a monomer or a dimer and forms supercomplexes (SCs) in the inner mitochondrial membrane with NADH-ubiquinone oxidoreductase (complex I, CI) and ubiquinol-cytochrome c oxidoreductase (cytochrome b-c1 complex, complex III, CIII), resulting in different assemblies (supercomplex SCI(1)III(2)IV(1) and megacomplex MCI(2)III(2)IV(2)).

It localises to the mitochondrion inner membrane. It carries out the reaction 4 Fe(II)-[cytochrome c] + O2 + 8 H(+)(in) = 4 Fe(III)-[cytochrome c] + 2 H2O + 4 H(+)(out). Its function is as follows. Component of the cytochrome c oxidase, the last enzyme in the mitochondrial electron transport chain which drives oxidative phosphorylation. The respiratory chain contains 3 multisubunit complexes succinate dehydrogenase (complex II, CII), ubiquinol-cytochrome c oxidoreductase (cytochrome b-c1 complex, complex III, CIII) and cytochrome c oxidase (complex IV, CIV), that cooperate to transfer electrons derived from NADH and succinate to molecular oxygen, creating an electrochemical gradient over the inner membrane that drives transmembrane transport and the ATP synthase. Cytochrome c oxidase is the component of the respiratory chain that catalyzes the reduction of oxygen to water. Electrons originating from reduced cytochrome c in the intermembrane space (IMS) are transferred via the dinuclear copper A center (CU(A)) of subunit 2 and heme A of subunit 1 to the active site in subunit 1, a binuclear center (BNC) formed by heme A3 and copper B (CU(B)). The BNC reduces molecular oxygen to 2 water molecules using 4 electrons from cytochrome c in the IMS and 4 protons from the mitochondrial matrix. The sequence is that of Cytochrome c oxidase subunit 3 (MT-CO3) from Gallus gallus (Chicken).